Here is a 261-residue protein sequence, read N- to C-terminus: Succinate dehydrogenase iron-sulfur subunit (261 aa).

The segment at 1-23 (MAELRLPPNSVVKKGKEHKEQEE) is disordered. Positions 28–119 (RKVKIYRYDP…DIKIYPLPHM (92 aa)) constitute a 2Fe-2S ferredoxin-type domain. [2Fe-2S] cluster is bound by residues cysteine 80, cysteine 85, and cysteine 100. In terms of domain architecture, 4Fe-4S ferredoxin-type spans 161–191 (GREKLDGLYECILCACCSTSCPSYWWNGDKY). [4Fe-4S] cluster is bound by residues cysteine 171, cysteine 174, and cysteine 177. A [3Fe-4S] cluster-binding site is contributed by cysteine 181. An a ubiquinone-binding site is contributed by tryptophan 186. Positions 228 and 234 each coordinate [3Fe-4S] cluster. Cysteine 238 provides a ligand contact to [4Fe-4S] cluster.

The protein belongs to the succinate dehydrogenase/fumarate reductase iron-sulfur protein family. As to quaternary structure, part of an enzyme complex containing four subunits: a flavoprotein, an iron-sulfur, cytochrome b-556, and a hydrophobic anchor protein. Requires [2Fe-2S] cluster as cofactor. [3Fe-4S] cluster is required as a cofactor. [4Fe-4S] cluster serves as cofactor.

The catalysed reaction is a quinone + succinate = fumarate + a quinol. Its pathway is carbohydrate metabolism; tricarboxylic acid cycle; fumarate from succinate (bacterial route): step 1/1. This chain is Succinate dehydrogenase iron-sulfur subunit (sdhB), found in Rickettsia felis (strain ATCC VR-1525 / URRWXCal2) (Rickettsia azadi).